The following is a 502-amino-acid chain: MAINAQEISALIKKQIENFQPNFDVTETGIVTYIGDGIARARGLDNAMSGELLEFENGAYGMAQNLESNDVGIIILGDFSAIREGDVVKRTGKIMEVPVGEALIGRVVNPLGQPVDGLGDIETTGFRPVETPAPGVMQRKSVSEPLQTGLKAIDALVPIGRGQRELIIGDRQTGKTSVAIDAILNQKGQDMICIYVAIGQKESTVRTQVETLRRYGALDYTIVVTASASQPSPLLFIAPYAGVAMAEEFMYQGKHVLIVYDDLSKQAVAYRELSLLLRRPPGREAYPGDVFYLHSRLLERSAKVSDDLGGGSITALPFIETQAGDISAYIATNVISITDGQIFLQENLFNSGIRPAIDAGSSVSRVGGSAQIKAMKKVAGTLRLDLASYRELEAFTQFGSDLDAATQAKLNRGRRTVEILKQPLHKPLPVEKQVVILYALTHGFLDDVPVDDILAFEEALYDYFDVHYNDLFETIRTTKDLPEEAALDAAIKAFKEYSNFKS.

169–176 (GDRQTGKT) provides a ligand contact to ATP.

Belongs to the ATPase alpha/beta chains family. F-type ATPases have 2 components, CF(1) - the catalytic core - and CF(0) - the membrane proton channel. CF(1) has five subunits: alpha(3), beta(3), gamma(1), delta(1), epsilon(1). CF(0) has three main subunits: a(1), b(2) and c(9-12). The alpha and beta chains form an alternating ring which encloses part of the gamma chain. CF(1) is attached to CF(0) by a central stalk formed by the gamma and epsilon chains, while a peripheral stalk is formed by the delta and b chains.

The protein resides in the cell membrane. The catalysed reaction is ATP + H2O + 4 H(+)(in) = ADP + phosphate + 5 H(+)(out). Produces ATP from ADP in the presence of a proton gradient across the membrane. The alpha chain is a regulatory subunit. This Streptococcus pyogenes serotype M18 (strain MGAS8232) protein is ATP synthase subunit alpha.